We begin with the raw amino-acid sequence, 1138 residues long: Nonsense-mediated mRNA decay factor SMG7 (1138 aa).

Residue Ser2 is modified to N-acetylserine. TPR repeat units follow at residues Gln152–Asn185 and Gln187–Phe219. 5 disordered regions span residues Ala515 to Arg612, Ser649 to Ala745, Gln838 to Pro871, Ser990 to Glu1090, and Ser1106 to His1138. Phosphoserine is present on Ser519. Positions Val525–Asp537 are enriched in polar residues. Over residues Glu548–Lys582 the composition is skewed to basic and acidic residues. Phosphothreonine is present on Thr575. Polar residues-rich tracts occupy residues Pro584 to Phe597 and Ser649 to Arg673. The span at Pro674–Ser721 shows a compositional bias: low complexity. A phosphoserine mark is found at Ser732 and Ser848. A compositionally biased stretch (basic and acidic residues) spans Pro854–Lys868. The segment covering Ser990–Thr999 has biased composition (polar residues). Residues Pro1000–Pro1026 show a composition bias toward low complexity. Over residues Asp1037–Lys1051 the composition is skewed to basic and acidic residues. Residues Ser1063 to Trp1082 are compositionally biased toward polar residues. Residues Gln1118–Gly1132 show a composition bias toward low complexity.

In terms of assembly, part of a complex that contains SMG5, SMG7, PPP2CA, a short isoform of UPF3A (isoform UPF3AS, but not isoform UPF3AL) and phosphorylated UPF1. Interacts with DHX34; the interaction is RNA-independent.

The protein resides in the cytoplasm. It is found in the nucleus. Its function is as follows. Plays a role in nonsense-mediated mRNA decay. Recruits UPF1 to cytoplasmic mRNA decay bodies. Together with SMG5 is thought to provide a link to the mRNA degradation machinery involving exonucleolytic pathways, and to serve as an adapter for UPF1 to protein phosphatase 2A (PP2A), thereby triggering UPF1 dephosphorylation. This Mus musculus (Mouse) protein is Nonsense-mediated mRNA decay factor SMG7.